The primary structure comprises 145 residues: FAD synthase (145 aa).

Residues 9 to 10, 14 to 17, Asp94, and Tyr122 contribute to the ATP site; these read TF and HPGH.

Belongs to the archaeal FAD synthase family. As to quaternary structure, homodimer. It depends on a divalent metal cation as a cofactor.

The enzyme catalyses FMN + ATP + H(+) = FAD + diphosphate. It participates in cofactor biosynthesis; FAD biosynthesis; FAD from FMN: step 1/1. Catalyzes the transfer of the AMP portion of ATP to flavin mononucleotide (FMN) to produce flavin adenine dinucleotide (FAD) coenzyme. This chain is FAD synthase, found in Methanocaldococcus infernus (strain DSM 11812 / JCM 15783 / ME).